A 212-amino-acid polypeptide reads, in one-letter code: Glycerol-3-phosphate acyltransferase (212 aa).

Helical transmembrane passes span 3 to 23, 78 to 98, 115 to 135, and 155 to 177; these read ILLA…VVVS, DVAV…PVFF, AVHP…AFFF, and FLFG…LLVW.

This sequence belongs to the PlsY family. Probably interacts with PlsX.

The protein localises to the cell inner membrane. It carries out the reaction an acyl phosphate + sn-glycerol 3-phosphate = a 1-acyl-sn-glycero-3-phosphate + phosphate. The protein operates within lipid metabolism; phospholipid metabolism. In terms of biological role, catalyzes the transfer of an acyl group from acyl-phosphate (acyl-PO(4)) to glycerol-3-phosphate (G3P) to form lysophosphatidic acid (LPA). This enzyme utilizes acyl-phosphate as fatty acyl donor, but not acyl-CoA or acyl-ACP. This chain is Glycerol-3-phosphate acyltransferase, found in Burkholderia lata (strain ATCC 17760 / DSM 23089 / LMG 22485 / NCIMB 9086 / R18194 / 383).